The primary structure comprises 122 residues: Small ribosomal subunit protein uS13 (122 aa).

The segment at 92–122 (HRMGLPVRGQRTKTNARTRKGPSKPVSGKKK) is disordered. The segment covering 101–122 (QRTKTNARTRKGPSKPVSGKKK) has biased composition (basic residues).

Belongs to the universal ribosomal protein uS13 family. As to quaternary structure, part of the 30S ribosomal subunit. Forms a loose heterodimer with protein S19. Forms two bridges to the 50S subunit in the 70S ribosome.

Located at the top of the head of the 30S subunit, it contacts several helices of the 16S rRNA. In the 70S ribosome it contacts the 23S rRNA (bridge B1a) and protein L5 of the 50S subunit (bridge B1b), connecting the 2 subunits; these bridges are implicated in subunit movement. Contacts the tRNAs in the A and P-sites. The polypeptide is Small ribosomal subunit protein uS13 (Ruminiclostridium cellulolyticum (strain ATCC 35319 / DSM 5812 / JCM 6584 / H10) (Clostridium cellulolyticum)).